Reading from the N-terminus, the 220-residue chain is Cell surface glycolipoprotein MPB83 (220 aa).

Positions 1 to 24 (MINVQAKPAAAASLAAIAIAFLAG) are cleaved as a signal peptide. C25 carries the N-palmitoyl cysteine lipid modification. Residue C25 is the site of S-diacylglycerol cysteine attachment. 2 O-linked (Man...) threonine glycosylation sites follow: T48 and T49. Residues 83 to 215 (QDPVATAASN…ATVYMIDTVL (133 aa)) form the FAS1 domain.

Interacts with host (human) TLR2. In terms of processing, O-glycosylated. Contains 0-3 mannose residues attached to residues 48-49 in various configurations; the dominant glycoform is Thr-48(Man)/Thr-49(Man2) with an unusual Man(1-&gt;3)Man linkage, but Thr48(Man3)/Thr49(Man0) through to Thr48(Man0/)Thr49(Man3) are also seen. When isolated from culture filtrate runs as 25 and 23 kDa proteins; the larger protein is much less abundant, mostly associated with the cell and starts at residue 28, the shorter is more abundant and starts at residue 48.

It is found in the cell membrane. It localises to the secreted. The protein localises to the cell wall. Induces expression of human (host) matrix metalloproteinase-9 (MMP9) in a TLR1/TLR2-dependent fashion; the acylated 20 first mature residues (residues 25-40) induce the most expression, but whole recombinant protein (non-acylated and non-glycosylated), and mannosylated but not acylated protein (residues 26-220) also induce expression. The polypeptide is Cell surface glycolipoprotein MPB83 (mpb83) (Mycobacterium bovis (strain ATCC BAA-935 / AF2122/97)).